The sequence spans 363 residues: Pyrimidine monooxygenase RutA (363 aa).

FMN is bound by residues 49 to 50, Asn-115, Glu-124, 140 to 141, and Ser-190; these read IK and RY.

Belongs to the NtaA/SnaA/DszA monooxygenase family. RutA subfamily.

It carries out the reaction uracil + FMNH2 + NADH + O2 = (Z)-3-ureidoacrylate + FMN + NAD(+) + H2O + H(+). The enzyme catalyses thymine + FMNH2 + NADH + O2 = (Z)-2-methylureidoacrylate + FMN + NAD(+) + H2O + H(+). Catalyzes the pyrimidine ring opening between N-3 and C-4 by an unusual flavin hydroperoxide-catalyzed mechanism, adding oxygen atoms in the process to yield ureidoacrylate peracid, that immediately reacts with FMN forming ureidoacrylate and FMN-N(5)-oxide. The FMN-N(5)-oxide reacts spontaneously with NADH to produce FMN. Requires the flavin reductase RutF to regenerate FMN in vivo. The chain is Pyrimidine monooxygenase RutA from Klebsiella variicola (strain At-22).